Here is a 340-residue protein sequence, read N- to C-terminus: HPr kinase/phosphorylase (340 aa).

Residues His-153 and Lys-174 contribute to the active site. ATP is bound at residue Gly-168 to Ser-175. Position 175 (Ser-175) interacts with Mg(2+). The active-site Proton acceptor; for phosphorylation activity. Proton donor; for dephosphorylation activity is the Asp-192. The interval Met-216–Asp-225 is important for the catalytic mechanism of both phosphorylation and dephosphorylation. Residue Glu-217 participates in Mg(2+) binding. The active site involves Arg-258. The interval Pro-279–Lys-284 is important for the catalytic mechanism of dephosphorylation.

It belongs to the HPrK/P family. Homohexamer. The cofactor is Mg(2+).

The enzyme catalyses [HPr protein]-L-serine + ATP = [HPr protein]-O-phospho-L-serine + ADP + H(+). It catalyses the reaction [HPr protein]-O-phospho-L-serine + phosphate + H(+) = [HPr protein]-L-serine + diphosphate. In terms of biological role, catalyzes the ATP- as well as the pyrophosphate-dependent phosphorylation of a specific serine residue in HPr, a phosphocarrier protein of the phosphoenolpyruvate-dependent sugar phosphotransferase system (PTS). HprK/P also catalyzes the pyrophosphate-producing, inorganic phosphate-dependent dephosphorylation (phosphorolysis) of seryl-phosphorylated HPr (P-Ser-HPr). The chain is HPr kinase/phosphorylase from Chloroherpeton thalassium (strain ATCC 35110 / GB-78).